Reading from the N-terminus, the 360-residue chain is Phospho-N-acetylmuramoyl-pentapeptide-transferase (360 aa).

The next 10 membrane-spanning stretches (helical) occupy residues Ala26–Lys46, Gly70–Trp90, Ser94–Val114, Trp132–Gly152, Ile168–Ser188, Gly199–Thr219, Ala236–Phe256, Val263–Leu283, Leu288–Val308, and Val338–Lys358.

This sequence belongs to the glycosyltransferase 4 family. MraY subfamily. Mg(2+) serves as cofactor.

The protein localises to the cell inner membrane. It carries out the reaction UDP-N-acetyl-alpha-D-muramoyl-L-alanyl-gamma-D-glutamyl-meso-2,6-diaminopimeloyl-D-alanyl-D-alanine + di-trans,octa-cis-undecaprenyl phosphate = di-trans,octa-cis-undecaprenyl diphospho-N-acetyl-alpha-D-muramoyl-L-alanyl-D-glutamyl-meso-2,6-diaminopimeloyl-D-alanyl-D-alanine + UMP. It functions in the pathway cell wall biogenesis; peptidoglycan biosynthesis. Catalyzes the initial step of the lipid cycle reactions in the biosynthesis of the cell wall peptidoglycan: transfers peptidoglycan precursor phospho-MurNAc-pentapeptide from UDP-MurNAc-pentapeptide onto the lipid carrier undecaprenyl phosphate, yielding undecaprenyl-pyrophosphoryl-MurNAc-pentapeptide, known as lipid I. This chain is Phospho-N-acetylmuramoyl-pentapeptide-transferase, found in Vibrio campbellii (strain ATCC BAA-1116).